Here is a 688-residue protein sequence, read N- to C-terminus: Glycine--tRNA ligase beta subunit (688 aa).

Belongs to the class-II aminoacyl-tRNA synthetase family. As to quaternary structure, tetramer of two alpha and two beta subunits.

Its subcellular location is the cytoplasm. The catalysed reaction is tRNA(Gly) + glycine + ATP = glycyl-tRNA(Gly) + AMP + diphosphate. This chain is Glycine--tRNA ligase beta subunit, found in Listeria monocytogenes serovar 1/2a (strain ATCC BAA-679 / EGD-e).